The sequence spans 113 residues: B-type lectin plumieribetin (113 aa).

A Bulb-type lectin domain is found at 1–109 (NYLSKNDELR…STEIWNSDKN (109 aa)).

As to quaternary structure, homotetramer. Interacts with alpha-1-beta-1 integrin (ITGA1/ITGB1). In terms of processing, not glycosylated. Not N-glycosylated and not O-glycosylated with the mostcommon O-linked glycoconjugates. Post-translationally, the N-terminus is blocked. Expressed by sting venom glands and is also found in skin mucus. Not found in other tissues tested.

Its subcellular location is the secreted. May contribute to some of the local and systemic effects of envenomation by the scorpionfish. Preferentially recognizes mannose-containing carbohydrate structures, but its interaction with single mannose residues is weak. Potently inhibits alpha-1-beta-1 integrin (ITGA1/ITGB1) binding to basement membrane collagen IV in a divalent cation-independent manner. In addition, moderately inhibits both laminin binding integrins alpha-3-beta-1 (ITGA3/ITGB1) and alpha-7-beta-1 (ITGA7/ITGB1). Weakens the cell-collagen contacts, reduces cell spreading, and alters the actin cytoskeleton, after the compensating alpha-2-beta-1 integrin is blocked. On the cellular level, fails to completely detach hepatocarcinoma HepG2 cells and primary arterial smooth muscle cells from the collagen IV fragment CB3. The sequence is that of B-type lectin plumieribetin from Scorpaena plumieri (Spotted scorpionfish).